A 192-amino-acid polypeptide reads, in one-letter code: Phosphoheptose isomerase (192 aa).

Residues 37-192 (LADSFKQEGK…IQLVEKEMAK (156 aa)) enclose the SIS domain. 52–54 (NGG) contributes to the substrate binding site. Residues His-61 and Glu-65 each coordinate Zn(2+). Substrate-binding positions include Glu-65, 93–94 (ND), 119–121 (STS), Ser-124, and Gln-172. Zn(2+) contacts are provided by Gln-172 and His-180.

Belongs to the SIS family. GmhA subfamily. As to quaternary structure, homotetramer. Requires Zn(2+) as cofactor.

It localises to the cytoplasm. The enzyme catalyses 2 D-sedoheptulose 7-phosphate = D-glycero-alpha-D-manno-heptose 7-phosphate + D-glycero-beta-D-manno-heptose 7-phosphate. It participates in carbohydrate biosynthesis; D-glycero-D-manno-heptose 7-phosphate biosynthesis; D-glycero-alpha-D-manno-heptose 7-phosphate and D-glycero-beta-D-manno-heptose 7-phosphate from sedoheptulose 7-phosphate: step 1/1. Catalyzes the isomerization of sedoheptulose 7-phosphate in D-glycero-D-manno-heptose 7-phosphate. This is Phosphoheptose isomerase from Aeromonas salmonicida (strain A449).